The primary structure comprises 851 residues: MSSKQEIMSDQRFRRVAKDPRFWEMPEKDRKVKIDKRFRAMFHDKKFKLNYAVDKRGRPISHSTTEDLKRFYDLSDSDSNLSGEDSKALSQKKIKKKKTQTKKEIDSKNLVEKKKETKKANHKGSENKTDLDNSIGIKKMKTSCKFKIDSNISPKKDSKEFTQKNKKEKKNIVQHTTDSSLEEKQRTLDSGTSEIVKSPRIECSKTRREMQSVVQLIMTRDSDGYENSTDGEMCDKDALEEDSESVSEIGSDEESENEITSVGRASGDDDGSEDDEEEDEDEEEDEDEDSEDDDKSDSGPDLARGKGNIETSSEDEDDTADLFPEESGFEHAWRELDKDAPRADEITRRLAVCNMDWDRLKAKDLLALFNSFKPKGGVIFSVKIYPSEFGKERMKEEQVQGPVELLSIPEDAPEKDWTSREKLRDYQFKRLKYYYAVVDCDSPETASKIYEDCDGLEFESSCSFIDLRFIPDDITFDDEPKDVASEVNLTAYKPKYFTSAAMGTSTVEITWDETDHERITMLNRKFKKEELLDMDFQAYLASSSEDEEEIEEELQGDDGVNVEEDGKTKKSQKDDEEQIAKYRQLLQVIQEKEKKGKENDMEMEIKWVPGLKESAEEMVKNKLEGKDKLTPWEQFLEKKKEKKRLKRKQKALAEEASEEELPSDVDLNDPYFAEEVKQIGINKKSVKSAKDGTSPEEEIEIERQKAEMALLMMDEDEDSKKHFNYNKIVEHQNLSKKKKKQLMKKKELIEDDFEVNVNDARFQAMYTSHLFNLDPSDPNFKKTKAMEKILEEKARQRERKEQELTQAIKKKESEIEKESQRKSIDPALSMLIKSIKTKTEQFQARKKQKVK.

Residue S2 is modified to N-acetylserine. 3 disordered regions span residues 74–134 (LSDS…LDNS), 148–328 (IDSN…EESG), and 542–576 (SSSEDEEEIEEELQGDDGVNVEEDGKTKKSQKDDE). Phosphoserine is present on residues S75, S77, S79, and S82. The span at 90–100 (SQKKIKKKKTQ) shows a compositional bias: basic residues. A compositionally biased stretch (basic and acidic residues) spans 101–131 (TKKEIDSKNLVEKKKETKKANHKGSENKTDL). S134 and S153 each carry phosphoserine. The span at 154 to 165 (PKKDSKEFTQKN) shows a compositional bias: basic and acidic residues. Phosphoserine occurs at positions 179, 180, and 198. Residues 197–210 (KSPRIECSKTRREM) are compositionally biased toward basic and acidic residues. Acidic residues-rich tracts occupy residues 238–257 (ALEEDSESVSEIGSDEESEN) and 268–295 (DDDGSEDDEEEDEDEEEDEDEDSEDDDK). S296 and S298 each carry phosphoserine. T311 is subject to Phosphothreonine. Phosphoserine occurs at positions 312 and 313. Acidic residues-rich tracts occupy residues 312-324 (SSEDEDDTADLFP) and 544-563 (SEDEEEIEEELQGDDGVNVE). Basic and acidic residues predominate over residues 564-573 (EDGKTKKSQK). Phosphoserine is present on S614. Residues 640 to 650 (KEKKRLKRKQK) are compositionally biased toward basic residues. The interval 640–667 (KEKKRLKRKQKALAEEASEEELPSDVDL) is disordered. Acidic residues predominate over residues 655–667 (EASEEELPSDVDL). 2 positions are modified to phosphoserine: S657 and S663. T693 bears the Phosphothreonine mark. 3 positions are modified to phosphoserine: S694, S735, and S823. Residues 730–824 (EHQNLSKKKK…IEKESQRKSI (95 aa)) adopt a coiled-coil conformation. Residues 794–824 (ARQRERKEQELTQAIKKKESEIEKESQRKSI) show a composition bias toward basic and acidic residues. The interval 794-827 (ARQRERKEQELTQAIKKKESEIEKESQRKSIDPA) is disordered.

It belongs to the ESF1 family. Interacts with ABT1. Forms a complex with ABT1 and suppresses the ABT1-induced activation of polymerase II-directed transcription in mammalian cells.

The protein resides in the nucleus. It localises to the nucleolus. Its subcellular location is the nucleoplasm. Functionally, may constitute a novel regulatory system for basal transcription. Negatively regulates ABT1. This Homo sapiens (Human) protein is ESF1 homolog (ESF1).